A 281-amino-acid chain; its full sequence is Very-long-chain (3R)-3-hydroxyacyl-CoA dehydratase 1 (281 aa).

Over 1–68 the chain is Cytoplasmic; the sequence is MGKGDWRQGR…RRLGLLATAW (68 aa). Residues 69 to 88 form a helical membrane-spanning segment; sequence LTFYNIAMTAGWLVLAIAMV. The Lumenal portion of the chain corresponds to 89-107; it reads RFYMEKGTHRGLYKSIQKT. A helical transmembrane segment spans residues 108-124; that stretch reads LKFFQTFALLEVVHCLI. At 125–134 the chain is on the cytoplasmic side; sequence GIVPTSVLVT. A helical membrane pass occupies residues 135–152; that stretch reads GVQVSSRIFMVWLITHSI. At 153-158 the chain is on the lumenal side; it reads KPIQNE. Residues 159 to 173 form a helical membrane-spanning segment; that stretch reads ESVVLFLVSWTVTEI. The Cytoplasmic segment spans residues 174-196; that stretch reads TRYSFYTFSLLDHLPHFIKWARY. The helical transmembrane segment at 197–214 threads the bilayer; sequence NLFIILYPVGVAGELLTI. Residues Y203 and E210 contribute to the active site. Residues 215–244 are Lumenal-facing; that stretch reads YAALPYVKKSGMFSVRLPNKYNVSFDYYYF. N-linked (GlcNAc...) asparagine glycosylation occurs at N236. A helical membrane pass occupies residues 245–262; that stretch reads LLITMASYIPLFPQLYFH. At 263–281 the chain is on the cytoplasmic side; the sequence is MLRQRRKVLHGEVIAEKDD.

Belongs to the very long-chain fatty acids dehydratase HACD family. As to quaternary structure, may interact with enzymes of the ELO family (including ELOVL1); with those enzymes that mediate condensation, the first of the four steps of the reaction cycle responsible for fatty acids elongation, may be part of a larger fatty acids elongase complex. Interacts with TECR. Post-translationally, N-glycosylated. In terms of tissue distribution, expressed at high levels in heart, skeletal muscle and testis, weak expression in kidney and liver.

The protein localises to the endoplasmic reticulum membrane. It catalyses the reaction a very-long-chain (3R)-3-hydroxyacyl-CoA = a very-long-chain (2E)-enoyl-CoA + H2O. The enzyme catalyses (3R)-hydroxyhexadecanoyl-CoA = (2E)-hexadecenoyl-CoA + H2O. It carries out the reaction (3R)-hydroxyoctadecanoyl-CoA = (2E)-octadecenoyl-CoA + H2O. The catalysed reaction is (3R)-hydroxyeicosanoyl-CoA = (2E)-eicosenoyl-CoA + H2O. It catalyses the reaction (3R)-hydroxydocosanoyl-CoA = (2E)-docosenoyl-CoA + H2O. The enzyme catalyses (3R)-hydroxytetracosanoyl-CoA = (2E)-tetracosenoyl-CoA + H2O. It carries out the reaction (3R)-hydroxyhexacosanoyl-CoA = (2E)-hexacosenoyl-CoA + H2O. Its pathway is lipid metabolism; fatty acid biosynthesis. This Mus musculus (Mouse) protein is Very-long-chain (3R)-3-hydroxyacyl-CoA dehydratase 1.